The chain runs to 389 residues: Chalcone synthase 3 (389 aa).

Residue Cys-164 is part of the active site.

Belongs to the thiolase-like superfamily. Chalcone/stilbene synthases family.

It carries out the reaction (E)-4-coumaroyl-CoA + 3 malonyl-CoA + 3 H(+) = 2',4,4',6'-tetrahydroxychalcone + 3 CO2 + 4 CoA. It functions in the pathway secondary metabolite biosynthesis; flavonoid biosynthesis. The primary product of this enzyme is 4,2',4',6'-tetrahydroxychalcone (also termed naringenin-chalcone or chalcone) which can under specific conditions spontaneously isomerize into naringenin. The sequence is that of Chalcone synthase 3 (CHS3) from Pisum sativum (Garden pea).